A 414-amino-acid chain; its full sequence is 2,3-diketo-5-methylthiopentyl-1-phosphate enolase (414 aa).

Lys99 acts as the Proton acceptor in catalysis. Substrate contacts are provided by residues Lys148, 174-177 (KDDE), His265, Gly338, and 360-361 (GG). Residues Lys174, Asp176, and Glu177 each contribute to the Mg(2+) site. Residue Lys174 is modified to N6-carboxylysine.

This sequence belongs to the RuBisCO large chain family. Type IV subfamily. In terms of assembly, homodimer. Mg(2+) serves as cofactor.

It catalyses the reaction 5-methylsulfanyl-2,3-dioxopentyl phosphate = 2-hydroxy-5-methylsulfanyl-3-oxopent-1-enyl phosphate. Its pathway is amino-acid biosynthesis; L-methionine biosynthesis via salvage pathway; L-methionine from S-methyl-5-thio-alpha-D-ribose 1-phosphate: step 3/6. Its function is as follows. Catalyzes the enolization of 2,3-diketo-5-methylthiopentyl-1-phosphate (DK-MTP-1-P) into 2-hydroxy-3-keto-5-methylthiopentenyl-1-phosphate (HK-MTPenyl-1-P). This is 2,3-diketo-5-methylthiopentyl-1-phosphate enolase from Bacillus cereus (strain B4264).